The chain runs to 431 residues: Bone morphogenetic protein 7 (431 aa).

The N-terminal stretch at 1–29 (MHVRSLRAAAPHSFVALWAPLFLLRSALA) is a signal peptide. Residues 30–292 (DFSLDNEVHS…ATEVHFRSIR (263 aa)) constitute a propeptide that is removed on maturation. Asn187, Asn302, Asn321, and Asn372 each carry an N-linked (GlcNAc...) asparagine glycan. Residues 291 to 311 (IRSTGSKQRSQNRSKTPKNQE) form a disordered region. 3 cysteine pairs are disulfide-bonded: Cys330–Cys396, Cys359–Cys428, and Cys363–Cys430.

Belongs to the TGF-beta family. As to quaternary structure, homodimer; disulfide-linked. Interacts with SOSTDC1. Interacts with TWSG1. Interacts with FBN1 (via N-terminal domain) and FBN2. Interacts with type I receptor ACVR1. Interacts with type II receptor ACVR2A. Interacts with NOG; this interaction inhibits canonical BMP signaling. Interacts with SCUBE3. Interacts with ERFE; the interaction inhibits BMP-induced transcription of HAMP. Interacts with TGFBR3. Post-translationally, several N-termini starting at positions 293, 300, 315 and 316 have been identified by direct sequencing resulting in secretion of different mature forms. As to expression, expressed in the kidney and bladder. Lower levels seen in the brain.

The protein localises to the secreted. In terms of biological role, growth factor of the TGF-beta superfamily that plays important role in various biological processes, including embryogenesis, hematopoiesis, neurogenesis and skeletal morphogenesis. Initiates the canonical BMP signaling cascade by associating with type I receptor ACVR1 and type II receptor ACVR2A. Once all three components are bound together in a complex at the cell surface, ACVR2A phosphorylates and activates ACVR1. In turn, ACVR1 propagates signal by phosphorylating SMAD1/5/8 that travel to the nucleus and act as activators and repressors of transcription of target genes. For specific functions such as growth cone collapse in developing spinal neurons and chemotaxis of monocytes, also uses BMPR2 as type II receptor. Can also signal through non-canonical pathways such as P38 MAP kinase signaling cascade that promotes brown adipocyte differentiation through activation of target genes, including members of the SOX family of transcription factors. Promotes the expression of HAMP, this is repressed by its interaction with ERFE. This Homo sapiens (Human) protein is Bone morphogenetic protein 7 (BMP7).